A 248-amino-acid chain; its full sequence is 14-3-3 protein gamma-2 (248 aa).

This sequence belongs to the 14-3-3 family. In terms of assembly, homodimer, and heterodimer with other family members. As to expression, expressed in brain, gill, heart, intestine, kidney, liver, ovary, skeletal muscle, spleen and testis.

Its subcellular location is the cytoplasm. Adapter protein implicated in the regulation of a large spectrum of both general and specialized signaling pathways. Binds to a large number of partners, usually by recognition of a phosphoserine or phosphothreonine motif. Binding generally results in the modulation of the activity of the binding partner. This chain is 14-3-3 protein gamma-2, found in Oncorhynchus mykiss (Rainbow trout).